A 133-amino-acid polypeptide reads, in one-letter code: Protein FwdD (133 aa).

The chain is Protein FwdD (fwdD) from Methanocaldococcus jannaschii (strain ATCC 43067 / DSM 2661 / JAL-1 / JCM 10045 / NBRC 100440) (Methanococcus jannaschii).